Consider the following 454-residue polypeptide: 3-phosphoshikimate 1-carboxyvinyltransferase (454 aa).

Residues K39, S40, and R44 each contribute to the 3-phosphoshikimate site. K39 contributes to the phosphoenolpyruvate binding site. The phosphoenolpyruvate site is built by G112 and R140. S185, Q187, D333, and K360 together coordinate 3-phosphoshikimate. Q187 provides a ligand contact to phosphoenolpyruvate. D333 functions as the Proton acceptor in the catalytic mechanism. Phosphoenolpyruvate is bound by residues R364 and R405.

Belongs to the EPSP synthase family. As to quaternary structure, monomer.

Its subcellular location is the cytoplasm. The enzyme catalyses 3-phosphoshikimate + phosphoenolpyruvate = 5-O-(1-carboxyvinyl)-3-phosphoshikimate + phosphate. Its pathway is metabolic intermediate biosynthesis; chorismate biosynthesis; chorismate from D-erythrose 4-phosphate and phosphoenolpyruvate: step 6/7. In terms of biological role, catalyzes the transfer of the enolpyruvyl moiety of phosphoenolpyruvate (PEP) to the 5-hydroxyl of shikimate-3-phosphate (S3P) to produce enolpyruvyl shikimate-3-phosphate and inorganic phosphate. The chain is 3-phosphoshikimate 1-carboxyvinyltransferase from Xylella fastidiosa (strain 9a5c).